Consider the following 384-residue polypeptide: Succinyl-diaminopimelate desuccinylase (384 aa).

Position 71 (His71) interacts with Zn(2+). The active site involves Asp73. Asp104 contributes to the Zn(2+) binding site. Glu138 functions as the Proton acceptor in the catalytic mechanism. Zn(2+) contacts are provided by Glu139, Glu167, and His353.

The protein belongs to the peptidase M20A family. DapE subfamily. As to quaternary structure, homodimer. Requires Zn(2+) as cofactor. It depends on Co(2+) as a cofactor.

It catalyses the reaction N-succinyl-(2S,6S)-2,6-diaminopimelate + H2O = (2S,6S)-2,6-diaminopimelate + succinate. The protein operates within amino-acid biosynthesis; L-lysine biosynthesis via DAP pathway; LL-2,6-diaminopimelate from (S)-tetrahydrodipicolinate (succinylase route): step 3/3. Functionally, catalyzes the hydrolysis of N-succinyl-L,L-diaminopimelic acid (SDAP), forming succinate and LL-2,6-diaminopimelate (DAP), an intermediate involved in the bacterial biosynthesis of lysine and meso-diaminopimelic acid, an essential component of bacterial cell walls. This is Succinyl-diaminopimelate desuccinylase from Aromatoleum aromaticum (strain DSM 19018 / LMG 30748 / EbN1) (Azoarcus sp. (strain EbN1)).